The primary structure comprises 362 residues: MRDETPEQPAPLRFGYTTGSCATATSLAAARLLLAGSADDAVEIVLPKGQRVMMRLEFCRATADGAEAATIKDAGDDPDVTHGALIFARVALASAPGVRFHAGPGVGTVTRAGLTLPVGEPAINPVPRQMMTTHLEALAAEHGYAGGFDVTIGVEGGEALALKTMNPRLGIVGGLSILGTTGIVRPFSCSAYIASIHQGIDVARANGIAHIAACTGNASEDAMRAHYQLPDMALIEMGDFAGAVLKHLRRAPVARLSMCGGFGKLSKLAAGHLDLHSRHSSIDLPLLAQWAAEAGASDALQAAMRAANTSQEALKLAHADGVPLGDLVCAQALRVARDIVPPSVAVEIFAIDRQGRFVGEAR.

It belongs to the CbiD family.

It catalyses the reaction Co-precorrin-5B + S-adenosyl-L-methionine = Co-precorrin-6A + S-adenosyl-L-homocysteine. It functions in the pathway cofactor biosynthesis; adenosylcobalamin biosynthesis; cob(II)yrinate a,c-diamide from sirohydrochlorin (anaerobic route): step 6/10. In terms of biological role, catalyzes the methylation of C-1 in cobalt-precorrin-5B to form cobalt-precorrin-6A. The sequence is that of Cobalt-precorrin-5B C(1)-methyltransferase from Burkholderia lata (strain ATCC 17760 / DSM 23089 / LMG 22485 / NCIMB 9086 / R18194 / 383).